The following is a 428-amino-acid chain: Putative zinc metalloprotease SAS1196 (428 aa).

His-21 serves as a coordination point for Zn(2+). Residue Glu-22 is part of the active site. His-25 serves as a coordination point for Zn(2+). 4 consecutive transmembrane segments (helical) span residues 172–194, 309–331, 352–374, and 401–420; these read FLTL…IGLA, GSTL…GFSF, IISL…LIPI, and TTII…LVTW. The PDZ domain occupies 186-269; it reads ALVLFIGLAY…TKSVELTPKK (84 aa).

It belongs to the peptidase M50B family. Zn(2+) serves as cofactor.

The protein localises to the cell membrane. The polypeptide is Putative zinc metalloprotease SAS1196 (Staphylococcus aureus (strain MSSA476)).